Here is a 387-residue protein sequence, read N- to C-terminus: Probable inactive shikimate kinase like 2, chloroplastic (387 aa).

The transit peptide at 1-71 directs the protein to the chloroplast; it reads MAAFASGLAI…FNSFSCNCLS (71 aa). Residues 368–387 are disordered; it reads NIKPPGWDPSSDTGPHPQFT.

The protein belongs to the shikimate kinase family.

The protein resides in the plastid. Its subcellular location is the chloroplast. The sequence is that of Probable inactive shikimate kinase like 2, chloroplastic (SKL2) from Arabidopsis thaliana (Mouse-ear cress).